We begin with the raw amino-acid sequence, 468 residues long: E3 ubiquitin-protein ligase TRIM11 (468 aa).

The segment at 16-57 (CAICLDYFTDPVMTDCGHNFCRECIRRCWGQPEGPYACPECR) adopts an RING-type zinc-finger fold. Phosphoserine is present on Ser85. The segment at 87–128 (VPQGVCAAHREPLAAFCGDELRLLCAACERSGEHWAHRVRPL) adopts a B box-type zinc-finger fold. Zn(2+) is bound by residues Cys92, His95, Cys114, and His120. The stretch at 128–233 (LQDAAEDLKS…QLAELITELE (106 aa)) forms a coiled coil. A B30.2/SPRY domain is found at 268–461 (EMRTVCRVPG…MTICRLKGGP (194 aa)). Lys458 is covalently cross-linked (Glycyl lysine isopeptide (Lys-Gly) (interchain with G-Cter in ubiquitin)).

Belongs to the TRIM/RBCC family. Binds cytoplasmic tail of integrin alpha-1. Interacts with the HN peptide. Interacts with PHOX2B. Interacts (when autoubiquitinated) with SQSTM1/p62; promoting AIM2 recruitment to autophagosomes. Interacts with AIM2; promoting its autophagy-dependent degradation. Autoubiquitinated upon DNA stimulation; autoubiquitination promotes interaction with SQSTM1/p62 and recruitment of AIM2 to autophagosomes.

It localises to the cytoplasm. Its subcellular location is the nucleus. It catalyses the reaction S-ubiquitinyl-[E2 ubiquitin-conjugating enzyme]-L-cysteine + [acceptor protein]-L-lysine = [E2 ubiquitin-conjugating enzyme]-L-cysteine + N(6)-ubiquitinyl-[acceptor protein]-L-lysine.. It participates in protein modification; protein ubiquitination. In terms of biological role, E3 ubiquitin-protein ligase that promotes the degradation of insoluble ubiquitinated proteins, including insoluble PAX6, poly-Gln repeat expanded HTT and poly-Ala repeat expanded ARX. Mediates PAX6 ubiquitination leading to proteasomal degradation, thereby modulating cortical neurogenesis. May also inhibit PAX6 transcriptional activity, possibly in part by preventing the binding of PAX6 to its consensus sequences. May contribute to the regulation of the intracellular level of HN (humanin) or HN-containing proteins through the proteasomal degradation pathway. Mediates MED15 ubiquitination leading to proteasomal degradation. May contribute to the innate restriction of retroviruses. Upon overexpression, reduces HIV-1 and murine leukemia virus infectivity, by suppressing viral gene expression. Antiviral activity depends on a functional E3 ubiquitin-protein ligase domain. May regulate TRIM5 turnover via the proteasome pathway, thus counteracting the TRIM5-mediated cross-species restriction of retroviral infection at early stages of the retroviral life cycle. Acts as an inhibitor of the AIM2 inflammasome by promoting autophagy-dependent degradation of AIM2. Mechanistically, undergoes autoubiquitination upon DNA stimulation, promoting interaction with AIM2 and SQSTM1/p62, leading to AIM2 recruitment to autophagosomes. This is E3 ubiquitin-protein ligase TRIM11 (TRIM11) from Bos taurus (Bovine).